Consider the following 830-residue polypeptide: Eisosome protein 1 (830 aa).

Disordered regions lie at residues 1 to 29 (MSLV…SAGK), 128 to 156 (RSRT…KTPK), and 650 to 830 (GEFL…KEVF). Low complexity-rich tracts occupy residues 128-148 (RSRT…SSSS) and 741-761 (TKTT…KPVT). The segment covering 810-830 (EGGKEEPTSKDNRKSLFKEVF) has biased composition (basic and acidic residues).

This sequence belongs to the EIS1 family.

It is found in the cytoplasmic granule. It localises to the cell membrane. Required for normal formation of eisosomes, large cytoplasmic protein assemblies that localize to specialized domains on plasma membrane and mark the site of endocytosis. In Kluyveromyces lactis (strain ATCC 8585 / CBS 2359 / DSM 70799 / NBRC 1267 / NRRL Y-1140 / WM37) (Yeast), this protein is Eisosome protein 1 (EIS1).